The primary structure comprises 231 residues: Isoprenyl transferase (231 aa).

The active site involves Asp-14. Position 14 (Asp-14) interacts with Mg(2+). Residues 15-18, Trp-19, Arg-27, His-31, and 59-61 contribute to the substrate site; these read GNGR and STE. Asn-62 functions as the Proton acceptor in the catalytic mechanism. Substrate contacts are provided by residues Trp-63, Arg-65, Arg-176, and 182-184; that span reads RIS. Glu-195 contacts Mg(2+).

Belongs to the UPP synthase family. As to quaternary structure, homodimer. The cofactor is Mg(2+).

Catalyzes the condensation of isopentenyl diphosphate (IPP) with allylic pyrophosphates generating different type of terpenoids. The polypeptide is Isoprenyl transferase (Aquifex aeolicus (strain VF5)).